The primary structure comprises 153 residues: MFTIDFNDHTDLVNESWYHQIEDLLNFAKEQEQINEDAELSVTFVDKNEIQEINKTYRDKDKVTDVISFALEEDEPEIVGLDMPRVLGDIIICTNVAEEQADSFGHSFERELGFLALHGFLHLLGYDHMNEEDEKVMFSRQDTILNAYGLTRD.

Zn(2+) is bound by residues His-118, His-122, and His-128.

It belongs to the endoribonuclease YbeY family. It depends on Zn(2+) as a cofactor.

The protein resides in the cytoplasm. In terms of biological role, single strand-specific metallo-endoribonuclease involved in late-stage 70S ribosome quality control and in maturation of the 3' terminus of the 16S rRNA. The polypeptide is Endoribonuclease YbeY (Staphylococcus haemolyticus (strain JCSC1435)).